Here is a 393-residue protein sequence, read N- to C-terminus: CCA-adding enzyme (393 aa).

Residues Gly-27 and Arg-30 each contribute to the ATP site. Residues Gly-27 and Arg-30 each coordinate CTP. The Mg(2+) site is built by Asp-40 and Asp-42. ATP is bound by residues Arg-111, Asp-154, Arg-157, Arg-160, and Arg-163. Residues Arg-111, Asp-154, Arg-157, Arg-160, and Arg-163 each contribute to the CTP site.

The protein belongs to the tRNA nucleotidyltransferase/poly(A) polymerase family. Bacterial CCA-adding enzyme type 3 subfamily. As to quaternary structure, homodimer. Mg(2+) serves as cofactor.

It catalyses the reaction a tRNA precursor + 2 CTP + ATP = a tRNA with a 3' CCA end + 3 diphosphate. It carries out the reaction a tRNA with a 3' CCA end + 2 CTP + ATP = a tRNA with a 3' CCACCA end + 3 diphosphate. In terms of biological role, catalyzes the addition and repair of the essential 3'-terminal CCA sequence in tRNAs without using a nucleic acid template. Adds these three nucleotides in the order of C, C, and A to the tRNA nucleotide-73, using CTP and ATP as substrates and producing inorganic pyrophosphate. tRNA 3'-terminal CCA addition is required both for tRNA processing and repair. Also involved in tRNA surveillance by mediating tandem CCA addition to generate a CCACCA at the 3' terminus of unstable tRNAs. While stable tRNAs receive only 3'-terminal CCA, unstable tRNAs are marked with CCACCA and rapidly degraded. In Listeria monocytogenes serovar 1/2a (strain ATCC BAA-679 / EGD-e), this protein is CCA-adding enzyme.